Consider the following 605-residue polypeptide: Progranulin (605 aa).

An N-terminal signal peptide occupies residues 1–17; that stretch reads MWTLVGWTILVAGLVAG. Cystine bridges form between C126/C139 and C133/C149. An N-linked (GlcNAc...) asparagine glycan is attached at N197. 6 cysteine pairs are disulfide-bonded: C297-C309, C303-C319, C310-C327, C320-C334, C328-C341, and C335-C348. A disordered region spans residues 359 to 386; sequence QKTPAQPSRPSQPSPPGPPGPPSPPGPL. Pro residues predominate over residues 368 to 385; the sequence is PSQPSPPGPPGPPSPPGP. Disulfide bonds link C392–C404 and C398–C414.

It belongs to the granulin family. Progranulin is secreted as a homodimer. Interacts with SLPI; interaction protects progranulin from proteolysis. Interacts (via region corresponding to granulin-7 peptide) with CTSD; stabilizes CTSD and increases its proteolytic activity. Interacts (via region corresponding to granulin-7 peptide) with SORT1; this interaction mediates endocytosis and lysosome delivery of progranulin; interaction occurs at the neuronal cell surface in a stressed nervous system. Interacts with PSAP; facilitates lysosomal delivery of progranulin from the extracellular space and the biosynthetic pathway. Forms a complex with PSAP and M6PR; PSAP bridges the binding between progranulin and M6PR. Forms a complex with PSAP and SORT1; progranulin bridges the interaction between PSAP and SORT1; facilitates lysosomal targeting of PSAP via SORT1; interaction enhances PSAP uptake in primary cortical neurons. Interacts (via regions corresponding to granulin-2 and granulin-7 peptides) with GBA1; this interaction prevents aggregation of GBA1-SCARB2 complex via interaction with HSPA1A upon stress. Interacts (via region corresponding to granulin-7 peptide) with HSPA1A; mediates recruitment of HSPA1A to GBA1 and prevents GBA1 aggregation in response to stress. Post-translationally, cleaved by ELANE; proteolysis is blocked by SLPI and is concentration- and time-dependent and induces CXCL8/IL-8 production; granulin-3 and granulin-4 are resistant to ELANE. Cleaved by CTSL in lysosome thus regulating the maturation and turnover of progranulin within the lysosome.

The protein localises to the secreted. The protein resides in the lysosome. Functionally, secreted protein that acts as a key regulator of lysosomal function and as a growth factor involved in inflammation, wound healing and cell proliferation. Regulates protein trafficking to lysosomes, and also the activity of lysosomal enzymes. Also facilitates the acidification of lysosomes, causing degradation of mature CTSD by CTSB. In addition, functions as a wound-related growth factor that acts directly on dermal fibroblasts and endothelial cells to promote division, migration and the formation of capillary-like tubule structures. Also promotes epithelial cell proliferation by blocking TNF-mediated neutrophil activation preventing release of oxidants and proteases. Moreover, modulates inflammation in neurons by preserving neurons survival, axonal outgrowth and neuronal integrity. In terms of biological role, inhibits epithelial cell proliferation and induces epithelial cells to secrete IL-8. Stabilizes CTSD through interaction with CTSD leading to maintain its aspartic-type peptidase activity. This is Progranulin (GRN) from Cavia porcellus (Guinea pig).